The following is a 139-amino-acid chain: D-ribose pyranase (139 aa).

The active-site Proton donor is histidine 20. Substrate is bound by residues aspartate 28, histidine 106, and 128–130 (YAN).

This sequence belongs to the RbsD / FucU family. RbsD subfamily. In terms of assembly, homodecamer.

Its subcellular location is the cytoplasm. It carries out the reaction beta-D-ribopyranose = beta-D-ribofuranose. It functions in the pathway carbohydrate metabolism; D-ribose degradation; D-ribose 5-phosphate from beta-D-ribopyranose: step 1/2. In terms of biological role, catalyzes the interconversion of beta-pyran and beta-furan forms of D-ribose. This chain is D-ribose pyranase, found in Escherichia coli O6:H1 (strain CFT073 / ATCC 700928 / UPEC).